A 598-amino-acid chain; its full sequence is NADH-quinone oxidoreductase subunit C/D (598 aa).

The NADH dehydrogenase I subunit C stretch occupies residues 1 to 190 (MSIFTQEVSA…EAFSLDDERL (190 aa)). The NADH dehydrogenase I subunit D stretch occupies residues 214–598 (DYLFLNLGPN…IDFVMADVDR (385 aa)).

The protein in the N-terminal section; belongs to the complex I 30 kDa subunit family. It in the C-terminal section; belongs to the complex I 49 kDa subunit family. NDH-1 is composed of 13 different subunits. Subunits NuoB, CD, E, F, and G constitute the peripheral sector of the complex.

The protein resides in the cell inner membrane. The enzyme catalyses a quinone + NADH + 5 H(+)(in) = a quinol + NAD(+) + 4 H(+)(out). Its function is as follows. NDH-1 shuttles electrons from NADH, via FMN and iron-sulfur (Fe-S) centers, to quinones in the respiratory chain. The immediate electron acceptor for the enzyme in this species is believed to be ubiquinone. Couples the redox reaction to proton translocation (for every two electrons transferred, four hydrogen ions are translocated across the cytoplasmic membrane), and thus conserves the redox energy in a proton gradient. The protein is NADH-quinone oxidoreductase subunit C/D of Shewanella woodyi (strain ATCC 51908 / MS32).